Reading from the N-terminus, the 1167-residue chain is Melanoma receptor tyrosine-protein kinase (1167 aa).

A signal peptide spans methionine 1 to threonine 25. Residues aspartate 26 to serine 642 lie on the Extracellular side of the membrane. 3 N-linked (GlcNAc...) asparagine glycosylation sites follow: asparagine 114, asparagine 144, and asparagine 201. 11 disulfide bridges follow: cysteine 195-cysteine 204, cysteine 199-cysteine 212, cysteine 220-cysteine 228, cysteine 224-cysteine 236, cysteine 237-cysteine 245, cysteine 241-cysteine 253, cysteine 256-cysteine 265, cysteine 269-cysteine 296, cysteine 300-cysteine 311, cysteine 315-cysteine 330, and cysteine 333-cysteine 337. Asparagine 356, asparagine 365, asparagine 398, asparagine 417, and asparagine 501 each carry an N-linked (GlcNAc...) asparagine glycan. Disulfide bonds link cysteine 504/cysteine 513, cysteine 508/cysteine 521, cysteine 524/cysteine 533, cysteine 537/cysteine 553, cysteine 556/cysteine 569, cysteine 560/cysteine 577, cysteine 593/cysteine 615, cysteine 618/cysteine 626, and cysteine 622/cysteine 634. N-linked (GlcNAc...) asparagine glycosylation is present at asparagine 576. Residue asparagine 621 is glycosylated (N-linked (GlcNAc...) asparagine). The chain crosses the membrane as a helical span at residues serine 643–leucine 665. The Cytoplasmic portion of the chain corresponds to leucine 666–arginine 1167. The Protein kinase domain occupies phenylalanine 710–leucine 977. ATP is bound by residues leucine 716–valine 724 and lysine 743. The Proton acceptor role is filled by aspartate 835.

It belongs to the protein kinase superfamily. Tyr protein kinase family. EGF receptor subfamily.

It is found in the membrane. It carries out the reaction L-tyrosyl-[protein] + ATP = O-phospho-L-tyrosyl-[protein] + ADP + H(+). Probable receptor with tyrosine-protein kinase activity. The sequence is that of Melanoma receptor tyrosine-protein kinase (xmrk) from Xiphophorus maculatus (Southern platyfish).